Here is a 157-residue protein sequence, read N- to C-terminus: Nicotinate dehydrogenase small FeS subunit (157 aa).

Residues 4–80 (ITINLNLNGE…ESTIITLEGV (77 aa)) form the 2Fe-2S ferredoxin-type domain. [2Fe-2S] cluster-binding residues include Cys-42, Cys-47, Cys-50, Cys-62, Cys-101, Cys-104, Cys-136, and Cys-138.

Heterooctamer of NDHM, NDHL, NDHS and NDHF. Dimer of heterotetramers. [2Fe-2S] cluster serves as cofactor.

The catalysed reaction is nicotinate + NADP(+) + H2O = 6-hydroxynicotinate + NADPH + H(+). The protein operates within cofactor degradation; nicotinate degradation; 6-hydroxynicotinate from nicotinate: step 1/1. Reversibly inactivated by selenide and sulfide. Not inhibited by cyanide. Its function is as follows. Catalyzes the hydroxylation of nicotinate to 6-hydroxynicotinate. Also active against 2-pyrazinecarboxylic acid, but inactive against other nicotinate analogs. This is Nicotinate dehydrogenase small FeS subunit (ndhS) from Eubacterium barkeri (Clostridium barkeri).